Here is a 1939-residue protein sequence, read N- to C-terminus: Myosin-8 (1939 aa).

The 50-residue stretch at 35-84 (DAKTSVFVAEPKASYVKSTIQSKEGGKVTVKTEGGATLTVREDQVFPMNP) folds into the Myosin N-terminal SH3-like domain. 2 positions are modified to phosphothreonine: threonine 66 and threonine 71. Positions 88–783 (DKIEDMAMMT…LLGLLEEMRD (696 aa)) constitute a Myosin motor domain. Position 132 is an N6,N6,N6-trimethyllysine (lysine 132). Residue 181–188 (GESGAGKT) coordinates ATP. Tyrosine 391 bears the Phosphotyrosine mark. Threonine 421 is subject to Phosphothreonine. The residue at position 426 (tyrosine 426) is a Phosphotyrosine. Phosphoserine is present on serine 627. The segment at 660-682 (LNKLMTNLRSTHPHFVRCIIPNE) is actin-binding. The residue at position 758 (histidine 758) is a Pros-methylhistidine. The interval 762 to 776 (KFGHTKVFFKAGLLG) is actin-binding. Residues 783 to 815 (DEKLSQIITRTQAVCRGFLMRVEYQKMLQRREA) form the IQ domain. Residues 844-1939 (LLKSAETEKE…REVHTKISAE (1096 aa)) are a coiled coil. 4 positions are modified to phosphoserine: serine 1093, serine 1097, serine 1163, and serine 1238. Threonine 1242 is modified (phosphothreonine). At serine 1244 the chain carries Phosphoserine. Threonine 1256 carries the phosphothreonine modification. Position 1262 is a phosphoserine (serine 1262). Threonine 1266 and threonine 1287 each carry phosphothreonine. Phosphoserine occurs at positions 1293, 1304, and 1307. Tyrosine 1465 bears the Phosphotyrosine mark. At threonine 1468 the chain carries Phosphothreonine. At serine 1475 the chain carries Phosphoserine. Tyrosine 1493 carries the post-translational modification Phosphotyrosine. A Phosphoserine modification is found at serine 1496. Threonine 1502 is modified (phosphothreonine). Position 1515 is a phosphoserine (serine 1515). Threonine 1518 bears the Phosphothreonine mark. A phosphoserine mark is found at serine 1555, serine 1575, serine 1601, serine 1604, serine 1715, and serine 1727. Residue threonine 1731 is modified to Phosphothreonine. Serine 1740 carries the post-translational modification Phosphoserine.

The protein belongs to the TRAFAC class myosin-kinesin ATPase superfamily. Myosin family. As to quaternary structure, muscle myosin is a hexameric protein that consists of 2 heavy chain subunits (MHC), 2 alkali light chain subunits (MLC) and 2 regulatory light chain subunits (MLC-2).

Its subcellular location is the cytoplasm. The protein localises to the myofibril. In terms of biological role, muscle contraction. The protein is Myosin-8 (MYH8) of Canis lupus familiaris (Dog).